Consider the following 104-residue polypeptide: ATP-dependent Clp protease adapter protein ClpS (104 aa).

It belongs to the ClpS family. Binds to the N-terminal domain of the chaperone ClpA.

Functionally, involved in the modulation of the specificity of the ClpAP-mediated ATP-dependent protein degradation. The polypeptide is ATP-dependent Clp protease adapter protein ClpS (Burkholderia ambifaria (strain MC40-6)).